We begin with the raw amino-acid sequence, 832 residues long: Mechanosensitive cation channel TMEM63B (832 aa).

Over 1–40 (MLPFLLATLGTAALNSSNPKDYCYSARIRSTVLQGLPFGG) the chain is Extracellular. A helical transmembrane segment spans residues 41–65 (VPTVLALDFMCFLALLFLFSILRKV). Residue cysteine 51 is the site of S-palmitoyl cysteine attachment. Residues 66–145 (AWDYGRLALV…KDDEIRDKCG (80 aa)) lie on the Cytoplasmic side of the membrane. The Mediates endoplasmic reticulum retention motif lies at 86–88 (RER). Serine 111, serine 113, serine 114, and serine 115 each carry phosphoserine. Residue cysteine 126 is the site of S-palmitoyl cysteine attachment. The chain crosses the membrane as a helical span at residues 146-178 (GDAVHYLSFQRHIIGLLVVVGVLSVGIVLPVNF). Residues 179–202 (SGDLLENNAYSFGRTTIANLKSGN) lie on the Extracellular side of the membrane. A helical transmembrane segment spans residues 203–227 (NLLWLHTSFAFLYLLLTVYSMRRHT). Over 228 to 427 (SKMRYKEDDL…IYWEHLSIRG (200 aa)) the chain is Cytoplasmic. An intracellular linker IL2; confers mechanosensitivity region spans residues 231-426 (RYKEDDLVKR…NIYWEHLSIR (196 aa)). 2 S-palmitoyl cysteine lipidation sites follow: cysteine 382 and cysteine 398. A helical transmembrane segment spans residues 428 to 457 (FIWWLRCLVINVVLFILLFFLTTPAIIITT). Topologically, residues 458-472 (MDKFNVTKPVEYLNN) are extracellular. Asparagine 462 carries N-linked (GlcNAc...) asparagine glycosylation. A helical transmembrane segment spans residues 473 to 502 (PIITQFFPTLLLWCFSALLPTIVYYSAFFE). Topologically, residues 503–506 (AHWT) are cytoplasmic. The chain crosses the membrane as a helical span at residues 507–543 (RSGENRTTMHKCYTFLIFMVLLLPSLGLSSLDLFFRW). Residues 544–566 (LFDKKFLAEAAIRFECVFLPDNG) lie on the Extracellular side of the membrane. Residues 567–599 (AFFVNYVIASAFIGNAMDLLRIPGLLMYMIRLC) traverse the membrane as a helical segment. The gating helix stretch occupies residues 567–599 (AFFVNYVIASAFIGNAMDLLRIPGLLMYMIRLC). The Cytoplasmic segment spans residues 600-619 (LARSAAERRNVKRHQAYEFQ). A helical membrane pass occupies residues 620–638 (FGAAYAWMMCVFTVVMTYS). Over 639 to 641 (ITC) the chain is Extracellular. Residues 642–666 (PIIVPFGLMYMLLKHLVDRYNLYYA) form a helical membrane-spanning segment. Residues 667–673 (YLPAKLD) lie on the Cytoplasmic side of the membrane. A helical membrane pass occupies residues 674–702 (KKIHSGAVNQVVAAPILCLFWLLFFSTMR). Topologically, residues 703–707 (TGFLA) are extracellular. Residues 708–728 (PTSMFTFVVLVITIVICLCHV) form a helical membrane-spanning segment. 2 S-palmitoyl cysteine lipidation sites follow: cysteine 726 and cysteine 729. Topologically, residues 729–832 (CFGHFKYLSA…DSLIENEIHQ (104 aa)) are cytoplasmic. 2 disordered regions span residues 748-767 (TDAV…AVPK) and 776-818 (LQDS…DTDF). Residues 749 to 758 (DAVSSRSNGR) are compositionally biased toward polar residues. The segment covering 789–801 (PGSSGDEPPSSSS) has biased composition (low complexity).

The protein belongs to the CSC1 (TC 1.A.17) family. In terms of assembly, monomer. Interacts with SLC19A2; interaction is required for the phospholipid scramblase activity. Palmitoylation is required for localization to the plasma membrane and stability. Expressed in cochlear hair cells (at protein level). Highly expressed in the subfornical organ of the brain. Expressed in small intestine. As to expression, brain-specific.

Its subcellular location is the cell membrane. It localises to the endoplasmic reticulum membrane. The protein resides in the lysosome membrane. It is found in the early endosome membrane. It carries out the reaction Ca(2+)(in) = Ca(2+)(out). It catalyses the reaction Mg(2+)(in) = Mg(2+)(out). The enzyme catalyses K(+)(in) = K(+)(out). The catalysed reaction is Na(+)(in) = Na(+)(out). It carries out the reaction Cs(+)(in) = Cs(+)(out). It catalyses the reaction a 1,2-diacyl-sn-glycero-3-phosphocholine(in) = a 1,2-diacyl-sn-glycero-3-phosphocholine(out). The enzyme catalyses a sphingomyelin(in) = a sphingomyelin(out). Its function is as follows. Mechanosensitive cation channel with low conductance and high activation threshold. Osmosensitive cation channel preferentially activated by hypotonic stress. Also acts as a phospholipid scramblase in response to changes in membrane structure: upon changes in membrane curvature and thickness, alters its conformation and translocates phospholipids, such as phosphatidylcholine and sphingomyelin, thereby controlling plasma membrane lipid distribution. Forms a heterodimer with SLC19A2, which mediates phospholipid scramblase activity following Ca(2+) stimulation. Expressed in excitatory neurons of the subfornical organ and functions as a thirst receptor that mediates neuronal response to hyperosmolality to drive thirst and drinking behavior. Facilitates intestinal motility by promoting proliferation of intestinal stem cells. Essential for the baby's first breath and respiration throughout life. Upon lung inflation conducts cation currents in alveolar type 1 and 2 cells triggering lamellar body exocytosis and surfactant secretion into airspace. Acts as an osmosensor in cochlear outer hair cells (OHCs) where it mediates calcium influx and regulatory volume decrease response. Required for the maintenance of OHC morphology, OHC survival and normal hearing. Functionally, brain-specific osmosensitive calcium channel isoform. This chain is Mechanosensitive cation channel TMEM63B, found in Mus musculus (Mouse).